The following is a 250-amino-acid chain: Ribosomal RNA small subunit methyltransferase J (250 aa).

S-adenosyl-L-methionine contacts are provided by residues Arg-96–Asp-97 and Asp-168.

Belongs to the methyltransferase superfamily. RsmJ family.

The protein localises to the cytoplasm. The enzyme catalyses guanosine(1516) in 16S rRNA + S-adenosyl-L-methionine = N(2)-methylguanosine(1516) in 16S rRNA + S-adenosyl-L-homocysteine + H(+). In terms of biological role, specifically methylates the guanosine in position 1516 of 16S rRNA. This chain is Ribosomal RNA small subunit methyltransferase J, found in Neisseria meningitidis serogroup B (strain ATCC BAA-335 / MC58).